Reading from the N-terminus, the 301-residue chain is Probable 5-dehydro-4-deoxyglucarate dehydratase (301 aa).

It belongs to the DapA family.

It catalyses the reaction 5-dehydro-4-deoxy-D-glucarate + H(+) = 2,5-dioxopentanoate + CO2 + H2O. Its pathway is carbohydrate acid metabolism; D-glucarate degradation; 2,5-dioxopentanoate from D-glucarate: step 2/2. The sequence is that of Probable 5-dehydro-4-deoxyglucarate dehydratase from Cereibacter sphaeroides (strain KD131 / KCTC 12085) (Rhodobacter sphaeroides).